A 417-amino-acid chain; its full sequence is Putative F-box protein At4g21240 (417 aa).

Residues 1–12 show a composition bias toward acidic residues; it reads MDRREEEEEETG. The segment at 1–25 is disordered; sequence MDRREEEEEETGYGEKGTRNQSKED. The span at 16–25 shows a compositional bias: basic and acidic residues; sequence KGTRNQSKED. One can recognise an F-box domain in the interval 30–76; sequence GKIFELIPLDMIPDILLRLPAKSAVRFRIVSKLWLSITTRPYFIRSF.

This Arabidopsis thaliana (Mouse-ear cress) protein is Putative F-box protein At4g21240.